Consider the following 43-residue polypeptide: Protein PsbN (43 aa).

Residues 4–24 form a helical membrane-spanning segment; that stretch reads AIVLIISVGAALVAVTGYGIY.

The protein belongs to the PsbN family.

It localises to the cellular thylakoid membrane. May play a role in photosystem I and II biogenesis. The protein is Protein PsbN of Trichormus variabilis (strain ATCC 29413 / PCC 7937) (Anabaena variabilis).